Consider the following 1046-residue polypeptide: Arrestin-related trafficking adapter 3 (1046 aa).

Residues 115–141 (YPPTEQKSKKKMDASAPNESNNAANNF) are disordered. Residues 128-140 (ASAPNESNNAANN) are compositionally biased toward low complexity. Residues Ser-155 and Ser-162 each carry the phosphoserine modification. Low complexity-rich tracts occupy residues 168 to 179 (SGLSSLNLSPLG) and 198 to 210 (RSSSVTSSNGPSR). The tract at residues 168–230 (SGLSSLNLSP…ATSPSVSHHN (63 aa)) is disordered. Phosphoserine occurs at positions 213 and 586. The segment covering 605-614 (TRNSRQFNRN) has biased composition (polar residues). 2 disordered regions span residues 605-627 (TRNSRQFNRNSKSHPSDNTIFNS) and 651-820 (PLSP…FAHS). Residues 669-694 (FDFSSDFISDAASGTTTTEVSSSESS) show a composition bias toward low complexity. Residues 734–785 (KNSDKNSSETLNKKESMSKIEENKHKRETTPKKRENRDVKSLSTPQREESKD) are compositionally biased toward basic and acidic residues. The segment covering 802-811 (LSLSSSLHSS) has biased composition (low complexity). Ser-826 and Ser-838 each carry phosphoserine. Residues 868-889 (NHDKNELNRHSTNTSSTPASAR) are disordered. The segment covering 877-889 (HSTNTSSTPASAR) has biased composition (polar residues). Phosphoserine is present on Ser-900. The interval 986–1017 (QNSAESDHNNDIFTQGSGLTESSKNSDSEERF) is disordered. Positions 996 to 1008 (DIFTQGSGLTESS) are enriched in polar residues. Phosphoserine is present on residues Ser-1022 and Ser-1023.

This sequence belongs to the ALY1 family. In terms of assembly, interacts with PCL6, PCL7 and RSP5. Ubiquitinated by RSP5. Post-translationally, phosphorylated by the cyclin-CDKs PCL6-PHO85 and PCL7-PHO85.

It is found in the cytoplasm. Functionally, may regulate endocytosis by recruiting RSP5 ubiquitin ligase activity to specific plasma membrane proteins in response to extracellular stimuli. The protein is Arrestin-related trafficking adapter 3 (ALY2) of Saccharomyces cerevisiae (strain ATCC 204508 / S288c) (Baker's yeast).